The chain runs to 323 residues: Sphingolipid delta(4)-desaturase DES1 (323 aa).

Transmembrane regions (helical) follow at residues 41–61 (HNLIWIVSLMVLTQLVAFYLV) and 68–88 (WLLFWTYVVGSCISHSMTLAI). Residues 89–93 (HEISH) carry the Histidine box-1 motif. A helical membrane pass occupies residues 104 to 124 (WNRCFGMFANLPLGLPYSVSF). Residues 128–132 (HMDHH) carry the Histidine box-2 motif. A run of 3 helical transmembrane segments spans residues 152-172 (FFCTPLRKLVWIILQPLFYTI), 185-205 (LEIINLVVQFSFDALIYYTLG), and 210-230 (FYMLVGSILGLGLHPISGHFI). Positions 259–263 (HNEHH) match the Histidine box-3 motif.

This sequence belongs to the fatty acid desaturase type 1 family. DEGS subfamily. Interacts with RLBP1; the interaction increases synthesis of chromophore-precursors by DEGS1.

Its subcellular location is the endoplasmic reticulum membrane. The enzyme catalyses an N-acylsphinganine + 2 Fe(II)-[cytochrome b5] + O2 + 2 H(+) = an N-acylsphing-4-enine + 2 Fe(III)-[cytochrome b5] + 2 H2O. The catalysed reaction is all-trans-retinol = 11-cis-retinol. It catalyses the reaction all-trans-retinol = 9-cis-retinol. It carries out the reaction all-trans-retinol = 13-cis-retinol. The enzyme catalyses 11-cis-retinol = 13-cis-retinol. The catalysed reaction is 11-cis-retinol = 9-cis-retinol. Its function is as follows. Has sphingolipid-delta-4-desaturase activity. Converts D-erythro-sphinganine to D-erythro-sphingosine (E-sphing-4-enine). Catalyzes the equilibrium isomerization of retinols. This chain is Sphingolipid delta(4)-desaturase DES1 (degs1), found in Xenopus tropicalis (Western clawed frog).